Consider the following 284-residue polypeptide: D-tagatose-1,6-bisphosphate aldolase subunit GatY (284 aa).

Aspartate 82 (proton donor) is an active-site residue. Zn(2+) contacts are provided by histidine 83 and histidine 180. Dihydroxyacetone phosphate is bound at residue glycine 181. Zn(2+) is bound at residue histidine 208. Dihydroxyacetone phosphate-binding positions include 209-211 (GAS) and 230-233 (NVAT).

Belongs to the class II fructose-bisphosphate aldolase family. TagBP aldolase GatY subfamily. As to quaternary structure, forms a complex with GatZ. Zn(2+) is required as a cofactor.

It catalyses the reaction D-tagatofuranose 1,6-bisphosphate = D-glyceraldehyde 3-phosphate + dihydroxyacetone phosphate. It participates in carbohydrate metabolism; D-tagatose 6-phosphate degradation; D-glyceraldehyde 3-phosphate and glycerone phosphate from D-tagatose 6-phosphate: step 2/2. In terms of biological role, catalytic subunit of the tagatose-1,6-bisphosphate aldolase GatYZ, which catalyzes the reversible aldol condensation of dihydroxyacetone phosphate (DHAP or glycerone-phosphate) with glyceraldehyde 3-phosphate (G3P) to produce tagatose 1,6-bisphosphate (TBP). Requires GatZ subunit for full activity and stability. Is involved in the catabolism of galactitol and D-tagatose. This Klebsiella oxytoca protein is D-tagatose-1,6-bisphosphate aldolase subunit GatY (gatY).